The sequence spans 273 residues: NAD-dependent protein deacylase (273 aa).

Residues 20-272 (RERLRQRIFF…PEFVDKFLKG (253 aa)) form the Deacetylase sirtuin-type domain. NAD(+) is bound at residue 48–67 (GAGISAESGIRTFRAADGLW). Y92 and R95 together coordinate substrate. 129 to 132 (QNID) is an NAD(+) binding site. Residue H147 is the Proton acceptor of the active site. Residues C155 and C174 each contribute to the Zn(2+) site. Residues 214–216 (GTS), 240–242 (NLE), and A258 contribute to the NAD(+) site.

This sequence belongs to the sirtuin family. Class III subfamily. Zn(2+) serves as cofactor.

The protein localises to the cytoplasm. It carries out the reaction N(6)-acetyl-L-lysyl-[protein] + NAD(+) + H2O = 2''-O-acetyl-ADP-D-ribose + nicotinamide + L-lysyl-[protein]. The catalysed reaction is N(6)-succinyl-L-lysyl-[protein] + NAD(+) + H2O = 2''-O-succinyl-ADP-D-ribose + nicotinamide + L-lysyl-[protein]. The enzyme catalyses N(6)-(2-hydroxyisobutanoyl)-L-lysyl-[protein] + NAD(+) + H2O = 2''-O-(2-hydroxyisobutanoyl)-ADP-D-ribose + nicotinamide + L-lysyl-[protein]. NAD-dependent lysine deacetylase that specifically removes acetyl groups on target proteins. Also acts as a protein-lysine deacylase by mediating protein desuccinylation and de-2-hydroxyisobutyrylation. Modulates the activities of several proteins which are inactive in their acylated form. The protein is NAD-dependent protein deacylase of Salmonella typhi.